The primary structure comprises 1117 residues: Cytospin-A (1117 aa).

3 disordered regions span residues 1 to 176 (MKKA…NQIS), 293 to 323 (SLSPEITPGNQSDGGGTLTSSVEGSAPGSVE), and 358 to 390 (SSDDALDAPSSSESEGIPSIERSRKGSSGNASE). Low complexity-rich tracts occupy residues 45-72 (TTASLSKTKSSDDLLAGMAGGVTVTNGV) and 99-119 (KISTGTSSSTKRSTSIGNKES). 2 stretches are compositionally biased toward basic and acidic residues: residues 120–131 (SSTRERLRERTR) and 158–171 (TTTECDVRMSKSKS). Residues 168–280 (KSKSDNQISD…LNALGFSLEQ (113 aa)) adopt a coiled-coil conformation. Polar residues predominate over residues 293 to 303 (SLSPEITPGNQ). Positions 358–377 (SSDDALDAPSSSESEGIPSI) are enriched in low complexity. Ser-384, Ser-385, and Ser-389 each carry phosphoserine. Coiled-coil stretches lie at residues 394-449 (ACLT…MESL) and 487-807 (RYME…RGRV). The interval 852-878 (SQVPNPTAAAIPRTPLSPSPMKTPPAA) is disordered. 3 positions are modified to phosphoserine: Ser-868, Ser-881, and Ser-887. The tract at residues 920-997 (TSSTSRPASL…PTTRSRIREE (78 aa)) is disordered. Basic and acidic residues predominate over residues 946–956 (RSSEEMKRDIS). Low complexity predominate over residues 971 to 990 (TTSPQLSLSSSPTASVTPTT). Positions 1011–1116 (GSKRNALLKW…YVTAIYKYFE (106 aa)) constitute a Calponin-homology (CH) domain.

This sequence belongs to the cytospin-A family. In terms of assembly, may interact with both microtubules and actin cytoskeleton.

The protein localises to the cytoplasm. Its subcellular location is the cytoskeleton. It localises to the spindle. It is found in the cell junction. The protein resides in the gap junction. In terms of biological role, involved in cytokinesis and spindle organization. May play a role in actin cytoskeleton organization and microtubule stabilization and hence required for proper cell adhesion and migration. The polypeptide is Cytospin-A (SPECC1L) (Canis lupus familiaris (Dog)).